The sequence spans 134 residues: Secreted RxLR effector protein 1 (134 aa).

The signal sequence occupies residues methionine 1–alanine 22. Positions serine 32–arginine 60 are disordered. Residues serine 37 to serine 52 are compositionally biased toward low complexity. The RxLR-dEER motif lies at arginine 57 to arginine 79.

It belongs to the RxLR effector family.

The protein resides in the secreted. It is found in the host nucleus. Effector that acts as a broad suppressor of cell death to interrupt plant immunity. Inhibits cell death induced by cell death-inducing proteins, including the PAMP elicitor INF1 from P.infestans. This Plasmopara viticola (Downy mildew of grapevine) protein is Secreted RxLR effector protein 1.